A 614-amino-acid polypeptide reads, in one-letter code: ATP-dependent RNA helicase dbp-3 (614 aa).

Positions 1–138 (MSSTKKHSRS…GTTTPAASTN (138 aa)) are disordered. A compositionally biased stretch (basic and acidic residues) spans 9–36 (RSEGEEKDARLAKKVKTDETPVDGEVKK). Composition is skewed to basic residues over residues 37–58 (ERKK…KSKK) and 91–109 (KKEK…KKAK). A compositionally biased stretch (low complexity) spans 117–138 (EESTSASKATTNGTTTPAASTN). Residues 180 to 207 (MNFSQLPQSNLISKNPFAAYTNPTPIQS) carry the Q motif motif. Positions 210–394 (WPFSLSGRDV…ESYMINPAQV (185 aa)) constitute a Helicase ATP-binding domain. 223 to 230 (AETGSGKT) is a binding site for ATP. The DEAD box motif lies at 340–343 (DEAD). The Helicase C-terminal domain maps to 435–584 (RLYELLKEAQ…PVPEELLKFG (150 aa)).

It belongs to the DEAD box helicase family. DDX5/DBP2 subfamily.

The protein resides in the nucleus. The protein localises to the nucleolus. It catalyses the reaction ATP + H2O = ADP + phosphate + H(+). In terms of biological role, ATP-dependent RNA helicase required for 60S ribosomal subunit synthesis. Involved in efficient pre-rRNA processing, predominantly at site A3, which is necessary for the normal formation of 25S and 5.8S rRNAs. This chain is ATP-dependent RNA helicase dbp-3 (dbp-3), found in Neurospora crassa (strain ATCC 24698 / 74-OR23-1A / CBS 708.71 / DSM 1257 / FGSC 987).